The chain runs to 837 residues: Striatin-interacting protein 1 (837 aa).

Residue Met1 is modified to N-acetylmethionine. Disordered stretches follow at residues 1 to 67 and 333 to 423; these read MEPA…ESPD and AASP…KGLP. Residues 18–35 show a composition bias toward pro residues; sequence PQPPPPPPPATAQPPPGA. The span at 47-60 shows a compositional bias: basic and acidic residues; that stretch reads KAREFNRNQRKDSE. A phosphoserine mark is found at Ser59, Ser335, and Ser339. Basic and acidic residues predominate over residues 356 to 377; that stretch reads KALIKQDNLDAFNERDPYKADD. The span at 378 to 391 shows a compositional bias: acidic residues; it reads SREEEEENDDDSSL. The residue at position 788 (Ser788) is a Phosphoserine. A required for STRIPAK core complex formation region spans residues 796–837; sequence DNCLQSVLGQRVDLPEDFQMNYDLWLEREVFSKPISWEELLQ.

Belongs to the STRIP family. Part of the core of STRIPAK complexes composed of PP2A catalytic and scaffolding subunits, the striatins (PP2A regulatory subunits), the striatin-associated proteins MOB4, STRIP1 and STRIP2, PDCD10 and members of the STE20 kinases, such as STK24 and STK26. The STRIPAK complex can be extended by adapter proteins such as SLMAP:SIKE1, CTTNBP2 or CTTNBP2NL. Interacts with CDC42BPB. Interacts with CTTNBP2NL.

It is found in the cytoplasm. Its function is as follows. Plays a role in the regulation of cell morphology and cytoskeletal organization. Required in the cortical actin filament dynamics and cell shape. Part of the striatin-interacting phosphatase and kinase (STRIPAK) complexes. STRIPAK complexes have critical roles in protein (de)phosphorylation and are regulators of multiple signaling pathways including Hippo, MAPK, nuclear receptor and cytoskeleton remodeling. Different types of STRIPAK complexes are involved in a variety of biological processes such as cell growth, differentiation, apoptosis, metabolism and immune regulation. In Mus musculus (Mouse), this protein is Striatin-interacting protein 1 (Strip1).